The primary structure comprises 466 residues: MSDVRLRFAPSPTGYLHVGGARTALFNWLLARKQGGTFILRIEDTDVARSTQESVDAILQGMEWLGLDWDEGPFYQSERFPVYREFVERLLAEGKAYRCYCTPEELEARREQAMKEGRKPKYDGTCRDLVTQDADRPFVVRFRAPHEGVTAFDDLIKGRIAFNNEELDDLIIQRTDGTPTYNFVVVIDDATMGITTVIRGDDHINNTPRQILLYEALGYPVPRFAHVPMILGADKTRLSKRHGATSVMAYRDMGFLPEAMVNYLVRLGWSHGDEEIFSRQDLVEKFTIEAVGKSAGVFNPDKLLWLNHHYIKESSPERLAELLVPFLRERGVDPSTGPSLPQVVKTLQERSRTLVEMADGALFYYRSEISYDEEAAAKHLVPGTLPLLASLAEKLDACADFSHSGLEAAFKEFIAEKGIKFGQLGPAVRVSLCGGTASPGIYEVVEALGKDETLRRLRRAVAYLEQ.

The 'HIGH' region motif lies at 10–20; that stretch reads PSPTGYLHVGG. Zn(2+)-binding residues include cysteine 99, cysteine 101, cysteine 126, and aspartate 128. Residues 237–241 carry the 'KMSKS' region motif; that stretch reads RLSKR. Position 240 (lysine 240) interacts with ATP.

It belongs to the class-I aminoacyl-tRNA synthetase family. Glutamate--tRNA ligase type 1 subfamily. Monomer. The cofactor is Zn(2+).

The protein localises to the cytoplasm. It catalyses the reaction tRNA(Glu) + L-glutamate + ATP = L-glutamyl-tRNA(Glu) + AMP + diphosphate. In terms of biological role, catalyzes the attachment of glutamate to tRNA(Glu) in a two-step reaction: glutamate is first activated by ATP to form Glu-AMP and then transferred to the acceptor end of tRNA(Glu). This chain is Glutamate--tRNA ligase, found in Geobacter sulfurreducens (strain ATCC 51573 / DSM 12127 / PCA).